We begin with the raw amino-acid sequence, 80 residues long: Small ribosomal subunit protein bS18 (80 aa).

Belongs to the bacterial ribosomal protein bS18 family. In terms of assembly, part of the 30S ribosomal subunit. Forms a tight heterodimer with protein bS6.

Functionally, binds as a heterodimer with protein bS6 to the central domain of the 16S rRNA, where it helps stabilize the platform of the 30S subunit. The protein is Small ribosomal subunit protein bS18 of Staphylococcus carnosus (strain TM300).